A 388-amino-acid polypeptide reads, in one-letter code: S-adenosylmethionine synthase (388 aa).

H14 provides a ligand contact to ATP. Mg(2+) is bound at residue D16. E42 lines the K(+) pocket. Residues E55 and Q98 each contribute to the L-methionine site. Residues 98 to 108 (QSAEISSAVDQ) are flexible loop. ATP-binding positions include 166 to 168 (DGK), D242, 248 to 249 (RK), A265, and K269. D242 provides a ligand contact to L-methionine. Residue K273 coordinates L-methionine.

The protein belongs to the AdoMet synthase family. As to quaternary structure, homotetramer; dimer of dimers. Mg(2+) is required as a cofactor. It depends on K(+) as a cofactor.

It is found in the cytoplasm. It carries out the reaction L-methionine + ATP + H2O = S-adenosyl-L-methionine + phosphate + diphosphate. Its pathway is amino-acid biosynthesis; S-adenosyl-L-methionine biosynthesis; S-adenosyl-L-methionine from L-methionine: step 1/1. In terms of biological role, catalyzes the formation of S-adenosylmethionine (AdoMet) from methionine and ATP. The overall synthetic reaction is composed of two sequential steps, AdoMet formation and the subsequent tripolyphosphate hydrolysis which occurs prior to release of AdoMet from the enzyme. The chain is S-adenosylmethionine synthase from Oenococcus oeni (strain ATCC BAA-331 / PSU-1).